The chain runs to 253 residues: Chloride intracellular channel protein 4 (253 aa).

A2 bears the N-acetylalanine mark. Residues 2 to 101 (ALSMPLNGLK…EEFLEEVLCP (100 aa)) are required for insertion into the membrane. The residue at position 4 (S4) is a Phosphoserine. Position 24 is an N6-acetyllysine (K24). The short motif at 35-38 (CPFS) is the G-site element. A helical membrane pass occupies residues 37–57 (FSQRLFMILWLKGVVFSVTTV). The GST C-terminal domain occupies 81 to 244 (NSEVKTDVNK…PSDKEVEIAY (164 aa)). K130 is modified (N6-acetyllysine). Phosphoserine occurs at positions 132, 167, and 236. At Y244 the chain carries Phosphotyrosine.

Belongs to the chloride channel CLIC family. In terms of assembly, component of a multimeric complex consisting of several cytoskeletal proteins, including actin, ezrin, alpha-actinin, gelsolin, IQGAP1 and CLIC5A. Binds directly to brain dynamin I in a complex containing actin, tubulin and 14-3-3 isoforms. Monomer. Interacts with HRH3. Interacts with AKAP9. In terms of tissue distribution, detected in epithelial cells from colon, esophagus and kidney (at protein level). Expression is prominent in heart, kidney, placenta and skeletal muscle.

It localises to the cytoplasm. The protein resides in the cytoskeleton. It is found in the microtubule organizing center. The protein localises to the centrosome. Its subcellular location is the cytoplasmic vesicle membrane. It localises to the nucleus. The protein resides in the cell membrane. It is found in the mitochondrion. The protein localises to the cell junction. Its subcellular location is the endoplasmic reticulum membrane. It catalyses the reaction chloride(in) = chloride(out). The enzyme catalyses thiocyanate(in) = thiocyanate(out). It carries out the reaction nitrate(in) = nitrate(out). The catalysed reaction is iodide(out) = iodide(in). It catalyses the reaction bromide(in) = bromide(out). The enzyme catalyses fluoride(in) = fluoride(out). It carries out the reaction choline(out) = choline(in). Inhibited by rapamycin, amphotericin B and IAA-94. Functionally, in the soluble state, catalyzes glutaredoxin-like thiol disulfide exchange reactions with reduced glutathione as electron donor. Can insert into membranes and form voltage-dependent multi-ion conductive channels. Membrane insertion seems to be redox-regulated and may occur only under oxidizing conditions. Has alternate cellular functions like a potential role in angiogenesis or in maintaining apical-basolateral membrane polarity during mitosis and cytokinesis. Could also promote endothelial cell proliferation and regulate endothelial morphogenesis (tubulogenesis). Promotes cell-surface expression of HRH3. This chain is Chloride intracellular channel protein 4, found in Homo sapiens (Human).